A 648-amino-acid chain; its full sequence is Replication restart protein PriA (648 aa).

The Helicase ATP-binding domain occupies 131–297 (TIFNESNKPT…KTHKYQLVTL (167 aa)). 144–151 (GVTGSGKT) serves as a coordination point for ATP. The short motif at 240–243 (DEEH) is the DEAH box element. Zn(2+) contacts are provided by cysteine 358, cysteine 361, cysteine 367, cysteine 370, cysteine 385, cysteine 388, cysteine 398, and cysteine 401. The region spanning 393–548 (KIFSSCPECL…SFFTNELEIR (156 aa)) is the Helicase C-terminal domain.

The protein belongs to the helicase family. PriA subfamily. In terms of assembly, component of the replication restart primosome. Requires Zn(2+) as cofactor.

It carries out the reaction Couples ATP hydrolysis with the unwinding of duplex DNA by translocating in the 3'-5' direction.. It catalyses the reaction ATP + H2O = ADP + phosphate + H(+). Its function is as follows. Initiates the restart of stalled replication forks, which reloads the replicative helicase on sites other than the origin of replication. Recognizes and binds to abandoned replication forks and remodels them to uncover a helicase loading site. Promotes assembly of the primosome at these replication forks. This is Replication restart protein PriA from Rickettsia typhi (strain ATCC VR-144 / Wilmington).